The chain runs to 26 residues: M-poneritoxin-Ng1d (26 aa).

Expressed by the venom gland.

The protein resides in the secreted. It is found in the target cell membrane. In terms of biological role, has a broad spectrum of activity against both Gram-positive and Gram-negative bacteria and S.cerevisiae. Has insecticidal and hemolytic activities. May act by disrupting the integrity of the bacterial cell membrane. The chain is M-poneritoxin-Ng1d from Neoponera goeldii (Ponerine ant).